Here is a 371-residue protein sequence, read N- to C-terminus: uncharacterized protein (371 aa).

Belongs to the Gfo/Idh/MocA family.

This is an uncharacterized protein from Synechocystis sp. (strain ATCC 27184 / PCC 6803 / Kazusa).